The sequence spans 93 residues: DNA-directed RNA polymerase subunit Rpo11 (93 aa).

It belongs to the archaeal Rpo11/eukaryotic RPB11/RPC19 RNA polymerase subunit family. As to quaternary structure, part of the RNA polymerase complex.

Its subcellular location is the cytoplasm. It carries out the reaction RNA(n) + a ribonucleoside 5'-triphosphate = RNA(n+1) + diphosphate. Functionally, DNA-dependent RNA polymerase (RNAP) catalyzes the transcription of DNA into RNA using the four ribonucleoside triphosphates as substrates. The sequence is that of DNA-directed RNA polymerase subunit Rpo11 from Sulfurisphaera tokodaii (strain DSM 16993 / JCM 10545 / NBRC 100140 / 7) (Sulfolobus tokodaii).